The primary structure comprises 168 residues: MRALLCSHRLLPLSSLSRTTVKTKSHNPKTLYPNNKPRWESKLHAGPKGFQSSRTSEKPGRPDPDPEDDPPIPQEVFERMMGRIVVSVGTPLGLGVAILKVLEVLKDRNVWDVPLWVPYLTTLVTFGSSALGIAYGSLSTNLDPAKTNSLFGLKEAKENWVEMWKEDQ.

A disordered region spans residues 18–73 (RTTVKTKSHNPKTLYPNNKPRWESKLHAGPKGFQSSRTSEKPGRPDPDPEDDPPIP). Basic and acidic residues predominate over residues 55–64 (TSEKPGRPDP). The next 2 membrane-spanning stretches (helical) occupy residues 84-104 (IVVS…VLEV) and 113-133 (VPLW…ALGI).

The protein resides in the membrane. This is an uncharacterized protein from Arabidopsis thaliana (Mouse-ear cress).